The sequence spans 1399 residues: FYVE, RhoGEF and PH domain-containing protein 6 (1399 aa).

Disordered stretches follow at residues 1–99 (MTSA…KDVR), 138–164 (MKEN…SEKC), 185–210 (LTQQ…NGDH), 235–281 (AHHN…DGIS), 299–341 (YTSK…NGSS), and 367–479 (PVDE…KKPQ). A compositionally biased stretch (low complexity) spans 50-60 (PAIAPKPKVPT). The segment covering 259–276 (AESRGHTDSCEPENKRVA) has biased composition (basic and acidic residues). Residues 307-321 (KPRKTHAAARLRRQK) show a composition bias toward basic residues. Polar residues-rich tracts occupy residues 332–341 (EPGNSNNGSS) and 377–402 (RALT…QQTP). Residues 403–418 (SLDTDSSLTSDSSGSG) show a composition bias toward low complexity. Over residues 428 to 453 (TYTQCSTQPLSLPKQVTSACTDQPPA) the composition is skewed to polar residues. Phosphoserine is present on residues Ser494, Ser531, and Ser583. The segment at 515–542 (RNYLHHPGPPNHGASASPFDMPNPTSEK) is disordered. Disordered stretches follow at residues 631 to 650 (QHGD…GLES) and 657 to 678 (TGEE…SLES). A phosphoserine mark is found at Ser670 and Ser697. The interval 768-840 (APDGQLQLDP…KQDEDAGMKS (73 aa)) is disordered. A compositionally biased stretch (acidic residues) spans 802-817 (PSDEEVINSSDEDDVS). Basic and acidic residues predominate over residues 821–838 (SKGEPDPLEDKQDEDAGM). Residues 841–1030 (KVHHIAKEIM…IEVANHANDT (190 aa)) form the DH domain. The region spanning 1059–1153 (VFLKEGTLMK…WLEAISSSIE (95 aa)) is the PH 1 domain. A Phosphoserine modification is found at Ser1167. The FYVE-type zinc finger occupies 1191 to 1250 (DTRATMCMICTSEFTLTWRRHHCRACGKIVCQACSSNKYGLDYLKGQLARVCEHCFQELQ). Positions 1197, 1200, 1213, 1216, 1221, 1224, 1242, and 1245 each coordinate Zn(2+). The PH 2 domain maps to 1302 to 1398 (DSTMSGYLYR…WIDAFQEGTV (97 aa)).

Its subcellular location is the cytoplasm. The protein resides in the cytoskeleton. Functionally, may activate CDC42, a member of the Ras-like family of Rho- and Rac proteins, by exchanging bound GDP for free GTP. May play a role in regulating the actin cytoskeleton and cell shape. In Mus musculus (Mouse), this protein is FYVE, RhoGEF and PH domain-containing protein 6 (Fgd6).